We begin with the raw amino-acid sequence, 112 residues long: uncharacterized protein (112 aa).

Residues 1–29 (MINLHRLCIIHVVATLLSTLLSLISVAIS) form the signal peptide. The N-linked (GlcNAc...) asparagine glycan is linked to N84. Residues 84–112 (NLSKGYNQRPEGSKEESHMVVKEKRKGDH) are disordered. A compositionally biased stretch (basic and acidic residues) spans 94 to 112 (EGSKEESHMVVKEKRKGDH).

It localises to the secreted. This is an uncharacterized protein from Homo sapiens (Human).